Consider the following 225-residue polypeptide: uncharacterized protein (225 aa).

The segment covering 1-19 has biased composition (polar residues); it reads MKFNSISPNKQHHTGFTTS. Positions 1 to 21 are disordered; sequence MKFNSISPNKQHHTGFTTSNN.

This is an uncharacterized protein from Dictyostelium discoideum (Social amoeba).